A 164-amino-acid chain; its full sequence is SsrA-binding protein (164 aa).

Belongs to the SmpB family.

Its subcellular location is the cytoplasm. In terms of biological role, required for rescue of stalled ribosomes mediated by trans-translation. Binds to transfer-messenger RNA (tmRNA), required for stable association of tmRNA with ribosomes. tmRNA and SmpB together mimic tRNA shape, replacing the anticodon stem-loop with SmpB. tmRNA is encoded by the ssrA gene; the 2 termini fold to resemble tRNA(Ala) and it encodes a 'tag peptide', a short internal open reading frame. During trans-translation Ala-aminoacylated tmRNA acts like a tRNA, entering the A-site of stalled ribosomes, displacing the stalled mRNA. The ribosome then switches to translate the ORF on the tmRNA; the nascent peptide is terminated with the 'tag peptide' encoded by the tmRNA and targeted for degradation. The ribosome is freed to recommence translation, which seems to be the essential function of trans-translation. The polypeptide is SsrA-binding protein (Gluconobacter oxydans (strain 621H) (Gluconobacter suboxydans)).